The chain runs to 777 residues: Glucocorticoid receptor (777 aa).

Positions 1–14 (MDSKESLTPGKEEN) are enriched in basic and acidic residues. Positions 1-21 (MDSKESLTPGKEENPSSVLTQ) are disordered. A modulating region spans residues 1-420 (MDSKESLTPG…TATTGPPPKL (420 aa)). Thr-8 is subject to Phosphothreonine. The residue at position 23 (Arg-23) is an Omega-N-methylarginine. Ser-45, Ser-113, Ser-134, and Ser-141 each carry phosphoserine. The tract at residues 130–182 (NRSTSVPENPKSSASSSVSAAPKEKEFPKTHSDVSSEQQNLKGQTGTNGGNVK) is disordered. Residues 134–150 (SVPENPKSSASSSVSAA) are compositionally biased toward low complexity. Residues 151 to 163 (PKEKEFPKTHSDV) show a composition bias toward basic and acidic residues. Over residues 164-174 (SSEQQNLKGQT) the composition is skewed to polar residues. A phosphoserine mark is found at Ser-203, Ser-211, and Ser-226. A Glycyl lysine isopeptide (Lys-Gly) (interchain with G-Cter in SUMO2) cross-link involves residue Lys-258. Residue Ser-267 is modified to Phosphoserine. Glycyl lysine isopeptide (Lys-Gly) (interchain with G-Cter in SUMO); alternate cross-links involve residues Lys-277 and Lys-293. Glycyl lysine isopeptide (Lys-Gly) (interchain with G-Cter in SUMO2); alternate cross-links involve residues Lys-277 and Lys-293. Positions 394 to 414 (SSPSMRPDVSSPPSSSSTATT) are enriched in low complexity. The interval 394–415 (SSPSMRPDVSSPPSSSSTATTG) is disordered. Ser-404 is modified (phosphoserine). A Glycyl lysine isopeptide (Lys-Gly) (interchain with G-Cter in ubiquitin) cross-link involves residue Lys-419. NR C4-type zinc fingers lie at residues 421–441 (CLVC…CGSC) and 457–481 (CAGR…YRKC). The nuclear receptor DNA-binding region spans 421-486 (CLVCSDEASG…RYRKCLQAGM (66 aa)). An N6-acetyllysine mark is found at Lys-480, Lys-492, Lys-494, and Lys-495. An interaction with CLOCK region spans residues 485 to 777 (GMNLEARKTK…NIKKLLFHQK (293 aa)). Residues 487–523 (NLEARKTKKKIKGIQQATTGVSQETSENPANKTIVPA) are hinge. The NR LBD domain occupies 524–758 (TLPQLTPTLV…FPEMLAEIIT (235 aa)). The interaction with CRY1 stretch occupies residues 532–697 (LVSLLEVIEP…EIRMTYIKEL (166 aa)). Lys-703 participates in a covalent cross-link: Glycyl lysine isopeptide (Lys-Gly) (interchain with G-Cter in SUMO).

The protein belongs to the nuclear hormone receptor family. NR3 subfamily. As to quaternary structure, heteromultimeric cytoplasmic complex with HSP90AA1, HSPA1A/HSPA1B, and FKBP5 or another immunophilin such as PPID, STIP1, or the immunophilin homolog PPP5C. Upon ligand binding FKBP5 dissociates from the complex and FKBP4 takes its place, thereby linking the complex to dynein and mediating transport to the nucleus, where the complex dissociates. Probably forms a complex composed of chaperones HSP90 and HSP70, co-chaperones CDC37, PPP5C, TSC1 and client protein TSC2, CDK4, AKT, RAF1 and NR3C1; this complex does not contain co-chaperones STIP1/HOP and PTGES3/p23. Directly interacts with UNC45A. Binds to DNA as a homodimer, and as heterodimer with NR3C2 or the retinoid X receptor. Binds STAT5A and STAT5B homodimers and heterodimers. Interacts with NRIP1, POU2F1, POU2F2 and TRIM28. Interacts with several coactivator complexes, including the SMARCA4 complex, CREBBP/EP300, TADA2L (Ada complex) and p160 coactivators such as NCOA2 and NCOA6. Interaction with BAG1 inhibits transactivation. Interacts with HEXIM1 and TGFB1I1. Interacts with NCOA1. Interacts with NCOA3, SMARCA4, SMARCC1, SMARCD1, and SMARCE1. Interacts with CLOCK, CRY1 and CRY2 in a ligand-dependent fashion. Interacts with CIART. Interacts with RWDD3. Interacts with UBE2I/UBC9 and this interaction is enhanced in the presence of RWDD3. Interacts with GRIP1. Interacts with NR4A3 (via nuclear receptor DNA-binding domain), represses transcription activity of NR4A3 on the POMC promoter Nur response element (NurRE). Directly interacts with PNRC2 to attract and form a complex with UPF1 and DCP1A; the interaction leads to rapid mRNA degradation. Interacts with GSK3B. Interacts with FNIP1 and FNIP2. Interacts (via C-terminus) with HNRNPU (via C-terminus). Interacts with MCM3AP. Interacts (via domain NR LBD) with HSP90AA1 and HSP90AB1. In the absence of hormonal ligand, interacts with TACC1. Interacts (via NR LBD domain) with ZNF764 (via KRAB domain); the interaction regulates transcription factor activity of NR3C1 by directing its actions toward certain biologic pathways. Acetylation by CLOCK reduces its binding to glucocorticoid response elements and its transcriptional activity. Post-translationally, increased proteasome-mediated degradation in response to glucocorticoids. In terms of processing, phosphorylated in the absence of hormone; becomes hyperphosphorylated in the presence of glucocorticoid. The Ser-203, Ser-226 and Ser-404-phosphorylated forms are mainly cytoplasmic, and the Ser-211-phosphorylated form is nuclear. Phosphorylation at Ser-211 increases transcriptional activity. Phosphorylation at Ser-203, Ser-226 and Ser-404 decreases signaling capacity. Phosphorylation at Ser-404 may protect from glucocorticoid-induced apoptosis. Phosphorylation at Ser-203 and Ser-211 is not required in regulation of chromosome segregation. May be dephosphorylated by PPP5C, attenuates NR3C1 action. Ubiquitinated by UBR5, leading to its degradation: UBR5 specifically recognizes and binds ligand-bound NR3C1 when it is not associated with coactivators (NCOAs). In presence of NCOAs, the UBR5-degron is not accessible, preventing its ubiquitination and degradation. Post-translationally, sumoylation at Lys-277 and Lys-293 negatively regulates its transcriptional activity. Sumoylation at Lys-703 positively regulates its transcriptional activity in the presence of RWDD3. Sumoylation at Lys-277 and Lys-293 is dispensable whereas sumoylation at Lys-703 is critical for the stimulatory effect of RWDD3 on its transcriptional activity. Heat shock increases sumoylation in a RWDD3-dependent manner. As to expression, within the infant and adult hippocampal formation, highest expression observed in the DG granule cell layer with moderate levels in the DG hilus, the CA2-CA4 pyramidal cell layer and the proximal part of the CA1 pyramidal cell layer. Moderate to high expression levels found in the presubiculum and in its' superficial layers. Weak but specific expression detected throughout the entire corticle mantle. In the amygdala, moderate levels were detected in the lateral, central and medial nuclei. Moderate expression levels were present in the PVNh alongside the third ventricle.

Its subcellular location is the cytoplasm. The protein localises to the nucleus. The protein resides in the mitochondrion. It is found in the cytoskeleton. It localises to the spindle. Its subcellular location is the microtubule organizing center. The protein localises to the centrosome. The protein resides in the chromosome. It is found in the nucleoplasm. Receptor for glucocorticoids (GC). Has a dual mode of action: as a transcription factor that binds to glucocorticoid response elements (GRE), both for nuclear and mitochondrial DNA, and as a modulator of other transcription factors. Affects inflammatory responses, cellular proliferation and differentiation in target tissues. Involved in chromatin remodeling. Plays a role in rapid mRNA degradation by binding to the 5' UTR of target mRNAs and interacting with PNRC2 in a ligand-dependent manner which recruits the RNA helicase UPF1 and the mRNA-decapping enzyme DCP1A, leading to RNA decay. Could act as a coactivator for STAT5-dependent transcription upon growth hormone (GH) stimulation and could reveal an essential role of hepatic GR in the control of body growth. Mediates glucocorticoid-induced apoptosis. Promotes accurate chromosome segregation during mitosis. May act as a tumor suppressor. May play a negative role in adipogenesis through the regulation of lipolytic and antilipogenic gene expression. The polypeptide is Glucocorticoid receptor (NR3C1) (Callithrix jacchus (White-tufted-ear marmoset)).